Reading from the N-terminus, the 104-residue chain is Integration host factor subunit beta (104 aa).

Positions 83 to 95 (GKEMRERLNRDSG) are enriched in basic and acidic residues. Positions 83–104 (GKEMRERLNRDSGDDAPTSDTA) are disordered.

This sequence belongs to the bacterial histone-like protein family. Heterodimer of an alpha and a beta chain.

Functionally, this protein is one of the two subunits of integration host factor, a specific DNA-binding protein that functions in genetic recombination as well as in transcriptional and translational control. The protein is Integration host factor subunit beta of Rhodopseudomonas palustris (strain ATCC BAA-98 / CGA009).